Here is a 661-residue protein sequence, read N- to C-terminus: B3 domain-containing protein Os12g0591400 (661 aa).

4 DNA-binding regions (TF-B3) span residues 2-95 (GDQK…FNPS), 197-290 (KTRC…FNPS), 437-535 (LYIT…FKES), and 562-658 (TNLT…IRKG).

It is found in the nucleus. The sequence is that of B3 domain-containing protein Os12g0591400 from Oryza sativa subsp. japonica (Rice).